Here is a 155-residue protein sequence, read N- to C-terminus: Mediator of RNA polymerase II transcription subunit 21 (155 aa).

A disordered region spans residues 29–73 (QAPPSVPPGQHRVDTMPEIKGKAASENPQSNPPQPAEPPVPEKIS). Basic and acidic residues predominate over residues 39-51 (HRVDTMPEIKGKA). Pro residues predominate over residues 58–69 (SNPPQPAEPPVP). The stretch at 75-147 (EQFNQDLKEF…EVLLKKVEDK (73 aa)) forms a coiled coil.

This sequence belongs to the Mediator complex subunit 21 family. In terms of assembly, component of the Mediator complex.

The protein localises to the nucleus. Component of the Mediator complex, a coactivator involved in the regulated transcription of nearly all RNA polymerase II-dependent genes. Mediator functions as a bridge to convey information from gene-specific regulatory proteins to the basal RNA polymerase II transcription machinery. Mediator is recruited to promoters by direct interactions with regulatory proteins and serves as a scaffold for the assembly of a functional preinitiation complex with RNA polymerase II and the general transcription factors. The polypeptide is Mediator of RNA polymerase II transcription subunit 21 (SRB7) (Phaeosphaeria nodorum (strain SN15 / ATCC MYA-4574 / FGSC 10173) (Glume blotch fungus)).